Here is a 314-residue protein sequence, read N- to C-terminus: MACGSVDPQGLLSPPLSSARLSNVPHVEGPWFWSCGQTNISCKVVNGKVVEVGKWPWQVSILFLGMYICSGSLIHHHWVLTAAHCLQRSKNPANYTVKVGVQTLPDNSSSELLVTSIVIHENFINHMSHDIAILKLKYPVTWSPFIQPICLPEVNFKPSIGTMCWVIGWGLEKAKGAPKTPYSVQGVAVRIVNNEICNHRYQFLLLKNQKKFIGNDMLCTSPEWGLDTCQDASGSSLVCQMNKTWIQMGVVSWNFGCGRRQFPSIYTSTSHFTQWIKRQIGDLKFASMAVPSFLSPFILTGYILLVSLGSLWLL.

Positions 44 to 281 constitute a Peptidase S1 domain; sequence VVNGKVVEVG…FTQWIKRQIG (238 aa). Cysteine 69 and cysteine 85 are joined by a disulfide. Residues histidine 84 and aspartate 130 each act as charge relay system in the active site. 3 disulfide bridges follow: cysteine 164–cysteine 239, cysteine 197–cysteine 219, and cysteine 229–cysteine 257. Catalysis depends on serine 233, which acts as the Charge relay system. A helical membrane pass occupies residues 293-313; that stretch reads FLSPFILTGYILLVSLGSLWL.

It belongs to the peptidase S1 family.

Its subcellular location is the membrane. The protein is Serine protease 46 (Prss46) of Rattus norvegicus (Rat).